Reading from the N-terminus, the 387-residue chain is MDMFWFIPTHGDSRYLGTSDGARQVSAEYVTQVAVAADTLGYEGVLIPTGRSCEDPWVIASSLINATRRLKFLVALRPGLMAPALAARTAASFDRLSGGRLLVNLVTGGDRGELEGDGVFLDHAERYEASAEFIRIWREIIAHSHSGESYDFDGKHLQVKAAKLLYPTVQRPYPPVWFGGSSDAAHDLAAEQVDTYLTWGEPPDAVAEKIASVRSKAAALGRTLTFGIRLHVIVRETEAEAWAAAESLISHLDDETVERAQSAFARMDSVGQRRMAALHSRGQRRTRADLEVSPNLWAGVGLVRGGAGTALVGDPQTVAKRIEEYAALGIDTFIFSGYPHLEEAYRFAELVFPLLPRTVKQKLPGQALSGPFGEVIANTIVPRASAR.

It belongs to the SsuD family.

It carries out the reaction an alkanesulfonate + FMNH2 + O2 = an aldehyde + FMN + sulfite + H2O + 2 H(+). Functionally, catalyzes the desulfonation of aliphatic sulfonates. In Xanthomonas axonopodis pv. citri (strain 306), this protein is Alkanesulfonate monooxygenase.